The primary structure comprises 1007 residues: Rho-type GTPase-activating protein 1 (1007 aa).

2 consecutive LIM zinc-binding domains span residues 13 to 66 (CVRC…CFDC) and 70 to 122 (CKNC…CLSC). Disordered regions lie at residues 203–293 (ITGY…KSPS), 401–478 (EKYS…STSL), and 505–600 (KETA…NDPS). Low complexity predominate over residues 212–221 (NSGSSKFGSN). Composition is skewed to polar residues over residues 250–261 (ANMSLNVATDPT) and 270–293 (HSRN…KSPS). Phosphothreonine is present on Thr-278. Ser-291 carries the post-translational modification Phosphoserine. A compositionally biased stretch (basic residues) spans 411-421 (KGRKISRSLSR). Residues 454-466 (RSQDLMRDNDSHT) show a composition bias toward basic and acidic residues. Polar residues-rich tracts occupy residues 467-478 (GLDTPNSNSTSL) and 529-579 (SPAT…LENS). Thr-532 is subject to Phosphothreonine. Residues 583 to 600 (EEQKETLYENSESRNDPS) are compositionally biased toward basic and acidic residues. The 216-residue stretch at 791 to 1006 (SSLVARCNYE…FIFGNYKDIL (216 aa)) folds into the Rho-GAP domain.

Its function is as follows. GTPase-activating protein (GAP) for CDC42 and/or RHO1. Negative regulator of the pheromone-response pathway through the STE20 protein kinase; acts at a step between the G-protein and the MAP kinase module. Dominant suppressor of bud emergence defect caused by deletion of IPL2/BEM2. Involved in the control of polarized cell growth and proper bud site selection. In Saccharomyces cerevisiae (strain ATCC 204508 / S288c) (Baker's yeast), this protein is Rho-type GTPase-activating protein 1 (RGA1).